Here is a 558-residue protein sequence, read N- to C-terminus: Putative ABC transporter ATP-binding protein SAG1633 (558 aa).

ABC transporter domains are found at residues 5 to 246 (IEWK…GIRE) and 295 to 527 (LSVQ…THLK). ATP-binding positions include 39 to 46 (GPSGSGKS) and 328 to 335 (GKNGAGKS).

Belongs to the ABC transporter superfamily.

It localises to the cell membrane. In terms of biological role, probably part of an ABC transporter complex. Responsible for energy coupling to the transport system. The protein is Putative ABC transporter ATP-binding protein SAG1633 of Streptococcus agalactiae serotype V (strain ATCC BAA-611 / 2603 V/R).